Consider the following 397-residue polypeptide: LIM/homeobox protein Lhx9 (397 aa).

LIM zinc-binding domains follow at residues 69 to 130 (ALCA…RFSV) and 131 to 193 (QRCA…LLQG). Disordered stretches follow at residues 248–272 (ENEA…RMRT), 330–365 (ENGG…LTDL), and 378–397 (SNMD…TNLF). The homeobox DNA-binding region spans 267-326 (TKRMRTSFKHHQLRTMKSYFAINHNPDAKDLKQLAQKTGLTKRVLQVWFQNARAKFRRNL). Low complexity predominate over residues 353–365 (LTPPGTATTLTDL). Positions 387–397 (SPSQTTLTNLF) are enriched in polar residues.

Interacts with LDB1 and LDB2. In terms of tissue distribution, expressed in the dorsal thalamus and inner nuclei of the cerebellum.

The protein localises to the nucleus. Involved in gonadal development. The chain is LIM/homeobox protein Lhx9 (Lhx9) from Mus musculus (Mouse).